A 447-amino-acid polypeptide reads, in one-letter code: Na(+)-translocating NADH-quinone reductase subunit A (447 aa).

The protein belongs to the NqrA family. Composed of six subunits; NqrA, NqrB, NqrC, NqrD, NqrE and NqrF.

It carries out the reaction a ubiquinone + n Na(+)(in) + NADH + H(+) = a ubiquinol + n Na(+)(out) + NAD(+). Its function is as follows. NQR complex catalyzes the reduction of ubiquinone-1 to ubiquinol by two successive reactions, coupled with the transport of Na(+) ions from the cytoplasm to the periplasm. NqrA to NqrE are probably involved in the second step, the conversion of ubisemiquinone to ubiquinol. The polypeptide is Na(+)-translocating NADH-quinone reductase subunit A (Haemophilus influenzae (strain 86-028NP)).